The primary structure comprises 529 residues: Snake venom 5'-nucleotidase (529 aa).

G1 is a signal peptide. D12 and H14 together coordinate Zn(2+). A disulfide bridge links C27 with C32. 4 residues coordinate Zn(2+): D60, N92, H195, and H218. N308 and N322 each carry an N-linked (GlcNAc...) asparagine glycan. Disulfide bonds link C328–C333 and C340–C362. R329 contacts AMP. Residues N365, R370, and F393 each contribute to the AMP site. C452 and C455 form a disulfide bridge. The AMP site is built by F476 and D482. S525 carries the GPI-anchor amidated serine lipid modification. The propeptide at A526–L529 is removed in mature form.

It belongs to the 5'-nucleotidase family. It depends on Zn(2+) as a cofactor. In terms of processing, venom 5'-nucleotidases (or a part thereof) may be released into the venom via exosome-like vesicles. They may be attached via a GPI anchor to the membrane of these vesicles. Soluble forms of 5'-nucleotidase might be released by cleavage of the ectodomain in the exosome-like vesicles or venom gland cells. As to expression, expressed by the venom gland.

The protein localises to the membrane. The enzyme catalyses a ribonucleoside 5'-phosphate + H2O = a ribonucleoside + phosphate. Functionally, hydrolyzes nucleotides into nucleosides. Snake venom 5'-nucleotidases are widely distributed among venomous snake taxa, but there is a lack of information about their biological activities. They have been shown to inhibit platelet aggregation. This effect may be due to the liberation of inhibitory AMP or adenosine by its action on ADP released upon initiation of aggregation. Venom 5'-nucleotidases are also known to synergistically act in vivo with other toxins like ADPases, phospholipases, and disintegrins to exert a more pronounced anti-coagulant effect. This Naja atra (Chinese cobra) protein is Snake venom 5'-nucleotidase.